Consider the following 358-residue polypeptide: Snurportin-1 (358 aa).

Met1 is modified (N-acetylmethionine). Disordered stretches follow at residues Met1 to Glu39 and Asp69 to Leu89. The necessary for interaction with KPNB1 and m3G-cap U1 and U5 snRNP import receptor activity stretch occupies residues Met1–Leu65. A necessary for interaction with XPO1 region spans residues Met1–Gly160. Polar residues-rich tracts occupy residues Ala7–Ala22 and Gln30–Glu39. In terms of domain architecture, IBB spans Ser11 to Met73. Ser75 is modified (phosphoserine). Residues Gly128–Arg130 are interaction with m3G-cap structure. The necessary for binding to the m3G-cap structure stretch occupies residues Met210 to Ala329. A compositionally biased stretch (basic and acidic residues) spans Lys315 to Ser341. Positions Lys315–Ser358 are disordered. Over residues Pro349–Ser358 the composition is skewed to polar residues. Ser351 is modified (phosphoserine).

This sequence belongs to the snurportin family. In terms of assembly, component of an import snRNP complex composed of KPNB1, SNUPN, SMN1 and ZNF259. Component of a nuclear export receptor complex composed of KPNB1, Ran, SNUPN and XPO1. Found in a trimeric export complex with SNUPN, Ran and XPO1. Interacts (via IBB domain) with KPNB1; the interaction is direct. Interacts with DDX20, IPO7, SMN1, SNRPB and XPO1. Interacts directly with XPO1. Its interaction with XPO1 and binding to m3G-cap U snRNPs appears to be mutually exclusive. Can form homomers.

It localises to the nucleus. Its subcellular location is the cytoplasm. Functions as an U snRNP-specific nuclear import adapter. Involved in the trimethylguanosine (m3G)-cap-dependent nuclear import of U snRNPs. Binds specifically to the terminal m3G-cap U snRNAs. This chain is Snurportin-1 (Snupn), found in Rattus norvegicus (Rat).